Here is a 506-residue protein sequence, read N- to C-terminus: ATP synthase subunit alpha (506 aa).

169–176 (GDRQTGKT) is an ATP binding site.

This sequence belongs to the ATPase alpha/beta chains family. As to quaternary structure, F-type ATPases have 2 components, CF(1) - the catalytic core - and CF(0) - the membrane proton channel. CF(1) has five subunits: alpha(3), beta(3), gamma(1), delta(1), epsilon(1). CF(0) has three main subunits: a(1), b(2) and c(9-12). The alpha and beta chains form an alternating ring which encloses part of the gamma chain. CF(1) is attached to CF(0) by a central stalk formed by the gamma and epsilon chains, while a peripheral stalk is formed by the delta and b chains.

The protein localises to the cell membrane. The enzyme catalyses ATP + H2O + 4 H(+)(in) = ADP + phosphate + 5 H(+)(out). Functionally, produces ATP from ADP in the presence of a proton gradient across the membrane. The alpha chain is a regulatory subunit. This is ATP synthase subunit alpha from Acetivibrio thermocellus (strain ATCC 27405 / DSM 1237 / JCM 9322 / NBRC 103400 / NCIMB 10682 / NRRL B-4536 / VPI 7372) (Clostridium thermocellum).